A 405-amino-acid chain; its full sequence is Elongation factor Tu (405 aa).

The 204-residue stretch at 10-213 (KEHVNVGTIG…AMDEYIPTPE (204 aa)) folds into the tr-type G domain. The tract at residues 19-26 (GHVDHGKS) is G1. Position 19-26 (19-26 (GHVDHGKS)) interacts with GTP. Serine 26 contributes to the Mg(2+) binding site. The segment at 64 to 68 (GITIN) is G2. A G3 region spans residues 85–88 (DCPG). Residues 85 to 89 (DCPGH) and 140 to 143 (NKCD) contribute to the GTP site. The interval 140 to 143 (NKCD) is G4. The segment at 178–180 (SAL) is G5.

It belongs to the TRAFAC class translation factor GTPase superfamily. Classic translation factor GTPase family. EF-Tu/EF-1A subfamily. Monomer.

The protein resides in the cytoplasm. It carries out the reaction GTP + H2O = GDP + phosphate + H(+). GTP hydrolase that promotes the GTP-dependent binding of aminoacyl-tRNA to the A-site of ribosomes during protein biosynthesis. The chain is Elongation factor Tu from Aquifex pyrophilus.